We begin with the raw amino-acid sequence, 296 residues long: Probable 2-(5''-triphosphoribosyl)-3'-dephosphocoenzyme-A synthase (296 aa).

It belongs to the CitG/MdcB family.

The catalysed reaction is 3'-dephospho-CoA + ATP = 2'-(5''-triphospho-alpha-D-ribosyl)-3'-dephospho-CoA + adenine. In Streptococcus mutans serotype c (strain ATCC 700610 / UA159), this protein is Probable 2-(5''-triphosphoribosyl)-3'-dephosphocoenzyme-A synthase.